The chain runs to 154 residues: Large ribosomal subunit protein uL13 (154 aa).

It belongs to the universal ribosomal protein uL13 family. Part of the 50S ribosomal subunit.

In terms of biological role, this protein is one of the early assembly proteins of the 50S ribosomal subunit, although it is not seen to bind rRNA by itself. It is important during the early stages of 50S assembly. The protein is Large ribosomal subunit protein uL13 of Brucella abortus (strain S19).